Reading from the N-terminus, the 238-residue chain is Orotidine 5'-phosphate decarboxylase (238 aa).

Substrate-binding positions include Asp11, Lys32, 59 to 68, Thr123, Arg185, Gln194, Gly214, and Arg215; that span reads DLKFHDIPNT. Lys61 functions as the Proton donor in the catalytic mechanism.

It belongs to the OMP decarboxylase family. Type 1 subfamily. As to quaternary structure, homodimer.

It catalyses the reaction orotidine 5'-phosphate + H(+) = UMP + CO2. The protein operates within pyrimidine metabolism; UMP biosynthesis via de novo pathway; UMP from orotate: step 2/2. In terms of biological role, catalyzes the decarboxylation of orotidine 5'-monophosphate (OMP) to uridine 5'-monophosphate (UMP). The chain is Orotidine 5'-phosphate decarboxylase from Nostoc sp. (strain PCC 7120 / SAG 25.82 / UTEX 2576).